The primary structure comprises 56 residues: MAVQQNRKTRSRRGMRRSHDALTAAALSVDATSGETHLRHNVTAEGYYRGKKVINK.

Positions 1 to 21 (MAVQQNRKTRSRRGMRRSHDA) are disordered. The span at 7-16 (RKTRSRRGMR) shows a compositional bias: basic residues.

Belongs to the bacterial ribosomal protein bL32 family.

The protein is Large ribosomal subunit protein bL32 of Vibrio cholerae serotype O1 (strain ATCC 39541 / Classical Ogawa 395 / O395).